A 465-amino-acid polypeptide reads, in one-letter code: Monocarboxylate transporter 4 (465 aa).

The Cytoplasmic portion of the chain corresponds to 2 to 17 (GGAVVDEGPTGVKAPD). Residues 18-38 (GGWGWAVLFGCFVITGFSYAF) form a helical membrane-spanning segment. Topologically, residues 39-61 (PKAVSVFFKELIQEFGIGYSDTA) are extracellular. Residues 62–82 (WISSILLAMLYGTGPLCSVCV) form a helical membrane-spanning segment. At 83–84 (NR) the chain is on the cytoplasmic side. A helical transmembrane segment spans residues 85–105 (FGCRPVMLVGGLFASLGMVAA). Residues 106-109 (SFCR) are Extracellular-facing. Residues 110–130 (SIIQVYLTTGVITGLGLALNF) traverse the membrane as a helical segment. Topologically, residues 131–149 (QPSLIMLNRYFSKRRPMAN) are cytoplasmic. A helical transmembrane segment spans residues 150 to 170 (GLAAAGSPVFLCALSPLGQLL). Residues 171 to 179 (QDRYGWRGG) are Extracellular-facing. The chain crosses the membrane as a helical span at residues 180–200 (FLILGGLLLNCCVCAALMRPL). Topologically, residues 201–227 (VVTAQPGSGPPRPSRRLLDLSVFRDRG) are cytoplasmic. Residues 228 to 248 (FVLYAVAASVMVLGLFVPPVF) form a helical membrane-spanning segment. The Extracellular portion of the chain corresponds to 249-264 (VVSYAKDLGVPDTKAA). Residues 265 to 285 (FLLTILGFIDIFARPAAGFVA) traverse the membrane as a helical segment. Over 286–294 (GLGKVRPYS) the chain is Cytoplasmic. A helical membrane pass occupies residues 295 to 315 (VYLFSFSMFFNGLADLAGSTA). The Extracellular portion of the chain corresponds to 316-317 (GD). A helical membrane pass occupies residues 318 to 338 (YGGLVVFCIFFGISYGMVGAL). Residues 339 to 351 (QFEVLMAIVGTHK) lie on the Cytoplasmic side of the membrane. A helical transmembrane segment spans residues 352 to 372 (FSSAIGLVLLMEAVAVLVGPP). The Extracellular portion of the chain corresponds to 373–384 (SGGKLLDATHVY). Residues 385 to 405 (MYVFILAGAEVLTSSLILLLG) traverse the membrane as a helical segment. Residues 406–465 (NFFCIRKKPKEPQPEVAAAEEEKLHKPPADSGVDLREVEHFLKAEPEKNGEVVHTPETSV) lie on the Cytoplasmic side of the membrane. A disordered region spans residues 419 to 438 (PEVAAAEEEKLHKPPADSGV). Basolateral sorting signal regions lie at residues 423–441 (AAEE…VDLR) and 441–465 (REVE…ETSV). The span at 425-438 (EEEKLHKPPADSGV) shows a compositional bias: basic and acidic residues. Phosphoserine is present on serine 436. Threonine 460 carries the post-translational modification Phosphothreonine. Serine 464 bears the Phosphoserine mark.

It belongs to the major facilitator superfamily. Monocarboxylate porter (TC 2.A.1.13) family. As to quaternary structure, interacts with BSG; interaction mediates SLC16A3 targeting to the plasma membrane. Highly expressed in skeletal muscle.

It localises to the cell membrane. The protein resides in the basolateral cell membrane. The catalysed reaction is (S)-lactate(in) + H(+)(in) = (S)-lactate(out) + H(+)(out). The enzyme catalyses pyruvate(out) + H(+)(out) = pyruvate(in) + H(+)(in). Proton-dependent transporter of monocarboxylates such as L-lactate and pyruvate. Plays a predominant role in L-lactate efflux from highly glycolytic cells. This is Monocarboxylate transporter 4 (SLC16A3) from Homo sapiens (Human).